Reading from the N-terminus, the 180-residue chain is Large ribosomal subunit protein uL5c (180 aa).

Belongs to the universal ribosomal protein uL5 family. Part of the 50S ribosomal subunit; contacts the 5S rRNA.

It localises to the plastid. Its subcellular location is the chloroplast. In terms of biological role, binds 5S rRNA, forms part of the central protuberance of the 50S subunit. The chain is Large ribosomal subunit protein uL5c (rpl5) from Tupiella akineta (Green alga).